A 475-amino-acid chain; its full sequence is tRNA-2-methylthio-N(6)-dimethylallyladenosine synthase (475 aa).

An MTTase N-terminal domain is found at 7–127 (RKLHIKSYGC…LPKLLAKARD (121 aa)). [4Fe-4S] cluster contacts are provided by cysteine 16, cysteine 52, cysteine 90, cysteine 168, cysteine 172, and cysteine 175. The Radical SAM core domain maps to 154–388 (RARGVSAFVT…AQLQALIDAQ (235 aa)). A TRAM domain is found at 394 to 456 (RAAIGRTVEV…RYSLKGRLAS (63 aa)).

It belongs to the methylthiotransferase family. MiaB subfamily. In terms of assembly, monomer. [4Fe-4S] cluster is required as a cofactor.

It localises to the cytoplasm. The enzyme catalyses N(6)-dimethylallyladenosine(37) in tRNA + (sulfur carrier)-SH + AH2 + 2 S-adenosyl-L-methionine = 2-methylsulfanyl-N(6)-dimethylallyladenosine(37) in tRNA + (sulfur carrier)-H + 5'-deoxyadenosine + L-methionine + A + S-adenosyl-L-homocysteine + 2 H(+). In terms of biological role, catalyzes the methylthiolation of N6-(dimethylallyl)adenosine (i(6)A), leading to the formation of 2-methylthio-N6-(dimethylallyl)adenosine (ms(2)i(6)A) at position 37 in tRNAs that read codons beginning with uridine. The polypeptide is tRNA-2-methylthio-N(6)-dimethylallyladenosine synthase (Afipia carboxidovorans (strain ATCC 49405 / DSM 1227 / KCTC 32145 / OM5) (Oligotropha carboxidovorans)).